Consider the following 469-residue polypeptide: Neuraminidase (469 aa).

Over M1–T9 the chain is Intravirion. Residues I10–V30 traverse the membrane as a helical segment. An involved in apical transport and lipid raft association region spans residues G11 to V33. At T31 to I469 the chain is on the virion surface side. A hypervariable stalk region region spans residues H36 to S88. Residues N61, N70, and N86 are each glycosylated (N-linked (GlcNAc...) asparagine; by host). Residues Q91–I469 form a head of neuraminidase region. Cystine bridges form between C92–C417, C124–C129, C183–C230, C232–C237, C278–C291, C280–C289, C318–C337, and C421–C447. Position 118 (R118) interacts with substrate. N146 carries N-linked (GlcNAc...) asparagine; by host glycosylation. The active-site Proton donor/acceptor is D151. R152 serves as a coordination point for substrate. N200 and N234 each carry an N-linked (GlcNAc...) asparagine; by host glycan. Residue E276–E277 participates in substrate binding. Residue R292 participates in substrate binding. Residues D293, G297, and D324 each coordinate Ca(2+). The tract at residues P326–K350 is disordered. An N-linked (GlcNAc...) asparagine; by host glycan is attached at N329. The span at S331–E343 shows a compositional bias: polar residues. R371 lines the substrate pocket. N402 is a glycosylation site (N-linked (GlcNAc...) asparagine; by host). Residue Y406 is the Nucleophile of the active site.

This sequence belongs to the glycosyl hydrolase 34 family. Homotetramer. It depends on Ca(2+) as a cofactor. In terms of processing, N-glycosylated.

The protein localises to the virion membrane. It is found in the host apical cell membrane. The catalysed reaction is Hydrolysis of alpha-(2-&gt;3)-, alpha-(2-&gt;6)-, alpha-(2-&gt;8)- glycosidic linkages of terminal sialic acid residues in oligosaccharides, glycoproteins, glycolipids, colominic acid and synthetic substrates.. Inhibited by the neuraminidase inhibitors zanamivir (Relenza) and oseltamivir (Tamiflu). These drugs interfere with the release of progeny virus from infected cells and are effective against all influenza strains. Resistance to neuraminidase inhibitors is quite rare. In terms of biological role, catalyzes the removal of terminal sialic acid residues from viral and cellular glycoconjugates. Cleaves off the terminal sialic acids on the glycosylated HA during virus budding to facilitate virus release. Additionally helps virus spread through the circulation by further removing sialic acids from the cell surface. These cleavages prevent self-aggregation and ensure the efficient spread of the progeny virus from cell to cell. Otherwise, infection would be limited to one round of replication. Described as a receptor-destroying enzyme because it cleaves a terminal sialic acid from the cellular receptors. May facilitate viral invasion of the upper airways by cleaving the sialic acid moieties on the mucin of the airway epithelial cells. Likely to plays a role in the budding process through its association with lipid rafts during intracellular transport. May additionally display a raft-association independent effect on budding. Plays a role in the determination of host range restriction on replication and virulence. Sialidase activity in late endosome/lysosome traffic seems to enhance virus replication. This Influenza A virus (strain A/Kitakyushu/159/1993 H3N2) protein is Neuraminidase.